The chain runs to 178 residues: Bifunctional protein PyrR (178 aa).

Substrate is bound by residues 41–42 (RR), 103–111 (DDVLYTGRT), and arginine 136. A PRPP-binding motif is present at residues 99–111 (VILVDDVLYTGRT).

The protein belongs to the purine/pyrimidine phosphoribosyltransferase family. PyrR subfamily. In terms of assembly, homodimer and homohexamer; in equilibrium.

The catalysed reaction is UMP + diphosphate = 5-phospho-alpha-D-ribose 1-diphosphate + uracil. Functionally, regulates transcriptional attenuation of the pyrimidine nucleotide (pyr) operon by binding in a uridine-dependent manner to specific sites on pyr mRNA. This disrupts an antiterminator hairpin in the RNA and favors formation of a downstream transcription terminator, leading to a reduced expression of downstream genes. Its function is as follows. Also displays a weak uracil phosphoribosyltransferase activity which is not physiologically significant. This chain is Bifunctional protein PyrR, found in Clostridium acetobutylicum (strain ATCC 824 / DSM 792 / JCM 1419 / IAM 19013 / LMG 5710 / NBRC 13948 / NRRL B-527 / VKM B-1787 / 2291 / W).